The primary structure comprises 975 residues: Homeobox protein cut-like 1 (975 aa).

The CUT 1 DNA-binding region spans 1–73; sequence SRQVKEQLIK…ILALRSIQGR (73 aa). Disordered regions lie at residues 90 to 113 and 126 to 148; these read PKRR…GSDE and LQVQ…TSDD. Residues 113–169 are a coiled coil; the sequence is EAIKSILEQAKRELQVQKTAEPAQPSSTSSSGTSDDAIRSILQQARREMEAQQAALD. S207 carries the post-translational modification Phosphoserine. The segment at 209-246 is disordered; the sequence is KKPPTAPDTSASTLPNPPALKKESQDAPGLDLPGAAES. Residues K229, K255, and K286 each participate in a glycyl lysine isopeptide (Lys-Gly) (interchain with G-Cter in SUMO2) cross-link. The segment covering 262–297 has biased composition (basic and acidic residues); the sequence is GVWKDHWWSTVQPERKSAAPPEDAKSEEAGGTKEKG. The interval 262–369 is disordered; the sequence is GVWKDHWWST…SKPAKPSVPP (108 aa). Polar residues predominate over residues 328 to 351; that stretch reads RTPQSSELSLTGASRSETPQNSPL. The residue at position 349 (S349) is a Phosphoserine. Residues 374 to 461 constitute a DNA-binding region (CUT 2); the sequence is QYEIYMYQEV…QGVLPVQGQQ (88 aa). The span at 476–489 shows a compositional bias: polar residues; sequence LQQGCVSSESTPKT. Residues 476-549 are disordered; sequence LQQGCVSSES…SQPATPLPLS (74 aa). The segment covering 490 to 506 has biased composition (low complexity); sequence SASCSPAPESPMSSSES. A phosphoserine mark is found at S499 and S509. The segment at residues 557–644 is a DNA-binding region (CUT 3); it reads QELVAMSPEL…VEKLMDMKRM (88 aa). The interval 652–687 is disordered; the sequence is RRHSSVSDSQPCEPPSVGIDYSQGASPQPQHQLKKP. A DNA-binding region (homeobox) is located at residues 684–743; the sequence is LKKPRVVLAPEEKEALKRAYQQKPYPSPKTIEELATQLNLKTSTVINWFHNYRSRIRREL. A Phosphoserine modification is found at S710. K724 participates in a covalent cross-link: Glycyl lysine isopeptide (Lys-Gly) (interchain with G-Cter in SUMO2). The tract at residues 752–949 is disordered; sequence SQGQAGARHS…DSRDNPLRKK (198 aa). A compositionally biased stretch (low complexity) spans 756–773; sequence AGARHSPSARSSGAAPSS. Position 777 is a phosphoserine (S777). Residues 780–813 are compositionally biased toward low complexity; that stretch reads GVEAAEGPGAADAEESAPAAAAKSQGGPAEAAVA. Positions 838 to 847 are enriched in gly residues; it reads PGRRGGGGPA. A compositionally biased stretch (low complexity) spans 850–860; sequence APAAPAAAARG. Residues 861 to 890 show a composition bias toward basic residues; sequence PSRRPGARAKPRRRRRRRRRHARGGGRRYL. Low complexity predominate over residues 907–929; that stretch reads RSSALPSTSAPAAARRPSSLQSL. S925 carries the post-translational modification Phosphoserine. Residues 937-946 are compositionally biased toward basic and acidic residues; the sequence is GARDSRDNPL. A phosphoserine mark is found at S956 and S966.

It belongs to the CUT homeobox family. In terms of assembly, interacts with BANP. As cells progress into S phase, a fraction of CUX1 molecules is proteolytically processed into N-terminally truncated proteins of 110 kDa by CTSL. Cell cycle-dependent processing of CUX1 serves to generate a CDP/Cux p110 with distinct DNA binding and transcriptional properties. Post-translationally, phosphorylated by PKA. A broad pattern of expression observed in tissues of diverse origins, such as cartilage, liver, brain, lung, heart and skeletal muscle. There are 2 distinct protein species: the larger one (230-250 kDa) is found mainly in adult brain, lung and heart, and the smaller one (180-190 kDa) predominates in early embryonic tissues.

Its subcellular location is the nucleus. Transcription factor involved in the control of neuronal differentiation in the brain. Regulates dendrite development and branching, and dendritic spine formation in cortical layers II-III. Also involved in the control of synaptogenesis. In addition, it has probably a broad role in mammalian development as a repressor of developmentally regulated gene expression. May act by preventing binding of positively-activing CCAAT factors to promoters. Component of nf-munr repressor; binds to the matrix attachment regions (MARs) (5' and 3') of the immunoglobulin heavy chain enhancer. Represses T-cell receptor (TCR) beta enhancer function by binding to MARbeta, an ATC-rich DNA sequence located upstream of the TCR beta enhancer. Binds to the TH enhancer; may require the basic helix-loop-helix protein TCF4 as a coactivator. Functionally, plays a role in cell cycle progression, in particular at the G1/S transition. As cells progress into S phase, a fraction of CUX1 molecules is proteolytically processed into N-terminally truncated proteins of 110 kDa. While CUX1 only transiently binds to DNA and carries the CCAAT-displacement activity, CDP/Cux p110 makes a stable interaction with DNA and stimulates expression of genes such as POLA1. The chain is Homeobox protein cut-like 1 (CUX1) from Canis lupus familiaris (Dog).